A 365-amino-acid chain; its full sequence is UPF0718 protein MJ0584 (365 aa).

Transmembrane regions (helical) follow at residues 6–26 (MSFIMNIINVMINTIIDYLNV), 32–52 (LLMAFLMAGGIASMINKNFII), 67–87 (VAAVSGSLLAVCSCTILPLFA), 108–128 (AINVLAIFYSAALLGWDIGFL), 130–150 (AVFAVVVSILIGLSMEIIFKS), 174–194 (ITFFALQFIMLLVITASPKLF), 201–221 (LYDGFLLKHLLFIILGIILAV), 245–265 (IVFPLLIIGVAIAGAIKAIIP), 282–302 (FIASFIGALMYFATLTEVPII), 308–328 (LGMGVGPAMALLLAGPSLSIP), and 344–364 (TYLGLVVIFSTICGYIAGIIL).

The protein belongs to the UPF0718 family.

The protein localises to the cell membrane. This is UPF0718 protein MJ0584 from Methanocaldococcus jannaschii (strain ATCC 43067 / DSM 2661 / JAL-1 / JCM 10045 / NBRC 100440) (Methanococcus jannaschii).